The sequence spans 508 residues: Maturase K (508 aa).

Belongs to the intron maturase 2 family. MatK subfamily.

The protein resides in the plastid. The protein localises to the chloroplast. Usually encoded in the trnK tRNA gene intron. Probably assists in splicing its own and other chloroplast group II introns. The polypeptide is Maturase K (Lupinus cosentinii (West Australian blue lupine)).